The sequence spans 169 residues: Putative adenylate kinase (169 aa).

ATP is bound by residues G10, G12, K13, T14, and T15. The segment at 28–51 is NMP; sequence HLNDLVGTEGLYDGVDADRGSKIV. An LID region spans residues 98–108; it reads DRGDSPEKAAE. R99 lines the ATP pocket.

It belongs to the adenylate kinase family. AK6 subfamily. Interacts with uS11. Not a structural component of 40S pre-ribosomes, but transiently interacts with them by binding to uS11.

It catalyses the reaction AMP + ATP = 2 ADP. It carries out the reaction ATP + H2O = ADP + phosphate + H(+). Functionally, broad-specificity nucleoside monophosphate (NMP) kinase that catalyzes the reversible transfer of the terminal phosphate group between nucleoside triphosphates and monophosphates. Also has ATPase activity. Involved in the late maturation steps of the 30S ribosomal particles, specifically 16S rRNA maturation. While NMP activity is not required for ribosome maturation, ATPase activity is. Associates transiently with small ribosomal subunit protein uS11. ATP hydrolysis breaks the interaction with uS11. May temporarily remove uS11 from the ribosome to enable a conformational change of the ribosomal RNA that is needed for the final maturation step of the small ribosomal subunit. In Halobacterium salinarum (strain ATCC 29341 / DSM 671 / R1), this protein is Putative adenylate kinase.